The following is a 931-amino-acid chain: MDSVTPNSRPESFPEFDSAGLAAAVDALAAQHSGREDMFRAAVVQLLKAELVKARAVAQAQLLKDRHGRRCAERLCFVQDEIIRILYAAATQHLYRSQVPSGAERMAVVATGGYGRGLMAPESDIDLLFILPYKQTAWGEQVAEAILYSLWDMGLKVGHATRSVDESIRQARGDMTIRTAILETRYLAGDRPLYDELVERFDTEVVQGTAAEFVAAKLAEREERHRRGGQSRYLVEPNVKDGKGGLRDLHTLFWIAKYVYRVRETAELVERGVFDAHEYRTFRRCADFLWSVRCNLHFVSGRPEERLSFDLQREIAVRLGYTSHPGMQDVERFMKHYFLVAKEVGNLTAILCAKLEDQQAKPAPVLSRVISRLKTGNSWRRVPESDDFIVDNNRINLAAPDVFKHDPVNLIRIFRLAQKNNLAFHPDAMRAVTRSLNLINTELRDNPDANRLFMEILTSNDAETVLRRMNETGVLGHFIRAFGRIVSMMQFNMYHHYTVDEHLIRCIGFLQEIERGGIDEFALASDLMRKIRPEHRAVIYISVLLHDVAKGRPEDHSIAGAKVARRLCPRLGFNNADTELVAWLIEEHLTMSTVAQSRDLSDRRTIEKFAAVVQSVEQMKLLTILTTADIRGVGPGVWNGWKAQLLRTLYYETEPVLTGGFSEVNRAKRITAAQAEFRNAFTDWPEDELNTYIGRHYPAYWLKVELPRKIRHARFVRASEDAGHKLAINVGFDPARGVTELTIFAMDHPWLLSIIAGACASAGANIVDAQIYTTTDGRALDTIAISREYERDEDEGRRATRIGETIEQVLEGKLRLPDAVARRTTRGKQHKAFSVEPEVSINNQWSELYTVIEVSGLDRPGLLYELTTAISKLNLNIASAHVATFGERARDVFYVTDLLGAQINAPTRQAAIKSALLHLLASDDTAAQPAA.

The interval 1–383 (MDSVTPNSRP…KTGNSWRRVP (383 aa)) is uridylyltransferase. Residues 384 to 739 (ESDDFIVDNN…VGFDPARGVT (356 aa)) form a uridylyl-removing region. The HD domain occupies 499-622 (VDEHLIRCIG…VQSVEQMKLL (124 aa)). ACT domains are found at residues 740–822 (ELTI…AVAR) and 851–931 (VIEV…QPAA).

It belongs to the GlnD family. Requires Mg(2+) as cofactor.

The enzyme catalyses [protein-PII]-L-tyrosine + UTP = [protein-PII]-uridylyl-L-tyrosine + diphosphate. It catalyses the reaction [protein-PII]-uridylyl-L-tyrosine + H2O = [protein-PII]-L-tyrosine + UMP + H(+). With respect to regulation, uridylyltransferase (UTase) activity is inhibited by glutamine, while glutamine activates uridylyl-removing (UR) activity. Functionally, modifies, by uridylylation and deuridylylation, the PII regulatory proteins (GlnB and homologs), in response to the nitrogen status of the cell that GlnD senses through the glutamine level. Under low glutamine levels, catalyzes the conversion of the PII proteins and UTP to PII-UMP and PPi, while under higher glutamine levels, GlnD hydrolyzes PII-UMP to PII and UMP (deuridylylation). Thus, controls uridylylation state and activity of the PII proteins, and plays an important role in the regulation of nitrogen fixation and metabolism. The protein is Bifunctional uridylyltransferase/uridylyl-removing enzyme of Bradyrhizobium sp. (strain BTAi1 / ATCC BAA-1182).